A 101-amino-acid polypeptide reads, in one-letter code: Ribonuclease kappa-A (101 aa).

Transmembrane regions (helical) follow at residues 13–33 and 68–88; these read ACGI…GVFF and VSYN…FSFC.

It belongs to the RNase K family.

The protein resides in the membrane. Functionally, endoribonuclease which preferentially cleaves ApU and ApG phosphodiester bonds. This Xenopus laevis (African clawed frog) protein is Ribonuclease kappa-A (rnasek-a).